A 311-amino-acid chain; its full sequence is Aspartate carbamoyltransferase catalytic subunit (311 aa).

Residues Arg55 and Thr56 each coordinate carbamoyl phosphate. Lys85 is an L-aspartate binding site. 3 residues coordinate carbamoyl phosphate: Arg106, His135, and Gln138. 2 residues coordinate L-aspartate: Arg168 and Arg230. Carbamoyl phosphate is bound by residues Leu268 and Pro269.

The protein belongs to the aspartate/ornithine carbamoyltransferase superfamily. ATCase family. In terms of assembly, heterododecamer (2C3:3R2) of six catalytic PyrB chains organized as two trimers (C3), and six regulatory PyrI chains organized as three dimers (R2).

The enzyme catalyses carbamoyl phosphate + L-aspartate = N-carbamoyl-L-aspartate + phosphate + H(+). Its pathway is pyrimidine metabolism; UMP biosynthesis via de novo pathway; (S)-dihydroorotate from bicarbonate: step 2/3. Its function is as follows. Catalyzes the condensation of carbamoyl phosphate and aspartate to form carbamoyl aspartate and inorganic phosphate, the committed step in the de novo pyrimidine nucleotide biosynthesis pathway. The sequence is that of Aspartate carbamoyltransferase catalytic subunit from Buchnera aphidicola subsp. Schizaphis graminum (strain Sg).